A 592-amino-acid polypeptide reads, in one-letter code: Bifunctional purine biosynthesis protein ADE17 (592 aa).

Positions 1-147 (MANYTKTAIL…KNHARVTILS (147 aa)) constitute an MGS-like domain. IMP-binding positions include 35 to 38 (SGGT), 65 to 68 (RVKT), 102 to 103 (CN), and 126 to 127 (DI). The Proton donor/acceptor; for FAICAR cyclization activity role is filled by lysine 138. 5-amino-1-(5-phospho-beta-D-ribosyl)imidazole-4-carboxamide-binding positions include 206-207 (RY), histidine 267, glycine 315, aspartate 338, asparagine 430, and arginine 450. Histidine 267 acts as the Proton acceptor; for AICAR formyltransferase activity in catalysis. Isoleucine 451 is a (6R)-10-formyltetrahydrofolate binding site. Residue phenylalanine 541 participates in 5-amino-1-(5-phospho-beta-D-ribosyl)imidazole-4-carboxamide binding. (6R)-10-formyltetrahydrofolate-binding positions include aspartate 546 and 565-566 (SV). Residue arginine 588 coordinates 5-amino-1-(5-phospho-beta-D-ribosyl)imidazole-4-carboxamide.

Belongs to the PurH family. As to quaternary structure, homodimer.

Its subcellular location is the cytoplasm. It is found in the cytosol. It carries out the reaction (6R)-10-formyltetrahydrofolate + 5-amino-1-(5-phospho-beta-D-ribosyl)imidazole-4-carboxamide = 5-formamido-1-(5-phospho-D-ribosyl)imidazole-4-carboxamide + (6S)-5,6,7,8-tetrahydrofolate. It catalyses the reaction IMP + H2O = 5-formamido-1-(5-phospho-D-ribosyl)imidazole-4-carboxamide. It functions in the pathway purine metabolism; IMP biosynthesis via de novo pathway; 5-formamido-1-(5-phospho-D-ribosyl)imidazole-4-carboxamide from 5-amino-1-(5-phospho-D-ribosyl)imidazole-4-carboxamide (10-formyl THF route): step 1/1. Its pathway is purine metabolism; IMP biosynthesis via de novo pathway; IMP from 5-formamido-1-(5-phospho-D-ribosyl)imidazole-4-carboxamide: step 1/1. Its function is as follows. Bifunctional enzyme that catalyzes the last two steps of purine biosynthesis. Acts as a transformylase that incorporates a formyl group to the AMP analog AICAR (5-amino-1-(5-phospho-beta-D-ribosyl)imidazole-4-carboxamide) to produce the intermediate formyl-AICAR (FAICAR). Also catalyzes the cyclization of FAICAR to IMP. The polypeptide is Bifunctional purine biosynthesis protein ADE17 (Saccharomyces cerevisiae (strain ATCC 204508 / S288c) (Baker's yeast)).